Reading from the N-terminus, the 821-residue chain is MSSNGGSNTNERSVGPDSGSLRSNSNLSSVNGDGSDSGSTRFRHRKISVKQRLRIHLPSDLKNLDKNEIQKRELLDVETGVEKNEEKEVHLHRILQKASVLEHLNSKKDYIPTPDASKTWSDYDKFYSGKFVETQAYVKFSVTVEDCCGVPYTLDEIDDDFLENSLNKNSDLKLNEDEFESLCSAFETAIKERQPFLQMDPETILTFDEVKPTLLKVDFNNMHLRSQLAQEVAAIHNPQTANSSSDGNGPFTTVFDSSTTANVRPIPELIEKYGKEVYEHWSRRKIEAKGAEIFPQLKFERPGEKEEVDPYVCFRRRELRHPRKTRRVDILNSQKLRILLKELRHAKDMSLLVAQREQINLQLIEDDLKILNKRKHVISIKRKLDIKGEDEDLINHKRKRPTIMTIEKKRQQEEALAAAKRAAEQEKAAAAAKAAEAKNKSKAQKKQNEQAAKVKSSKQKNSSSQDLTKKVTQEESQSEEQQPAMSHVYVKLPSSKIPDIVLEDVEKLLQNKEKSARRFVQERMARRKLEDNDEFINLTDDPHNPVFDLTTLNCSEVPFSPFSSIASSKLKINKSFYLRDLNDYLNGIATDLKVFNKDGEKIEDNKTASGNQNVRKTEVYNPFDSGSELHSREYPVKFRRRFGRGNIEYLDVKRKIDNFSDTRFCEFIDFKAIENQELENNGRNLDVYESRADEFSRLLEKWKFDSTNNEYGLRFSDEPARLNQISNDTQVIRFGTMLGTKSYEQLKEATIRYRKDYISRIRQQKLNAQKQQQILQQQQFLQQQQENGSPNNATMPINPINKSTLKQDVASNVLVGTQQKS.

A compositionally biased stretch (polar residues) spans methionine 1–arginine 12. Disordered regions lie at residues methionine 1–arginine 43, lysine 427–methionine 485, and glutamine 779–proline 799. Composition is skewed to low complexity over residues serine 18–serine 39 and glutamate 449–glutamine 465. The segment covering glutamate 786–proline 799 has biased composition (polar residues).

It belongs to the enhancer of polycomb family. Component of the NuA4 histone acetyltransferase complex.

The protein localises to the nucleus. Its function is as follows. Component of the NuA4 histone acetyltransferase complex which is involved in transcriptional activation of selected genes principally by acetylation of nucleosomal histone H4 and H2A. The NuA4 complex is also involved in DNA repair. Involved in gene silencing by neighboring heterochromatin, blockage of the silencing spreading along the chromosome, and required for cell cycle progression through G2/M. This Candida glabrata (strain ATCC 2001 / BCRC 20586 / JCM 3761 / NBRC 0622 / NRRL Y-65 / CBS 138) (Yeast) protein is Enhancer of polycomb-like protein 1 (EPL1).